Consider the following 364-residue polypeptide: Aminomethyltransferase (364 aa).

The protein belongs to the GcvT family. In terms of assembly, the glycine cleavage system is composed of four proteins: P, T, L and H.

The enzyme catalyses N(6)-[(R)-S(8)-aminomethyldihydrolipoyl]-L-lysyl-[protein] + (6S)-5,6,7,8-tetrahydrofolate = N(6)-[(R)-dihydrolipoyl]-L-lysyl-[protein] + (6R)-5,10-methylene-5,6,7,8-tetrahydrofolate + NH4(+). In terms of biological role, the glycine cleavage system catalyzes the degradation of glycine. This Shewanella loihica (strain ATCC BAA-1088 / PV-4) protein is Aminomethyltransferase.